A 217-amino-acid chain; its full sequence is UPF0319 protein HSM_0266 (217 aa).

The N-terminal stretch at 1 to 21 (MKFSFAALASAMLLTSTAAFA) is a signal peptide.

This sequence belongs to the UPF0319 family.

This is UPF0319 protein HSM_0266 from Histophilus somni (strain 2336) (Haemophilus somnus).